The sequence spans 91 residues: MGRSLKKGPFVADSLLRKVEKQNATEDKSVIKTWSRSSTILPMMIGHTIAVHNGKVHIPVFLTEQMVGHKLGEFAPTRTFRGHIKDKKGTR.

The protein belongs to the universal ribosomal protein uS19 family.

Its subcellular location is the plastid. It localises to the organellar chromatophore. In terms of biological role, protein S19 forms a complex with S13 that binds strongly to the 16S ribosomal RNA. This Paulinella chromatophora protein is Small ribosomal subunit protein uS19c.